A 132-amino-acid chain; its full sequence is Ribosome-binding factor A (132 aa).

The segment at 113–132 (EANSTRAKDDDEADTPAKDD) is disordered.

This sequence belongs to the RbfA family. As to quaternary structure, monomer. Binds 30S ribosomal subunits, but not 50S ribosomal subunits or 70S ribosomes.

The protein localises to the cytoplasm. Functionally, one of several proteins that assist in the late maturation steps of the functional core of the 30S ribosomal subunit. Associates with free 30S ribosomal subunits (but not with 30S subunits that are part of 70S ribosomes or polysomes). Required for efficient processing of 16S rRNA. May interact with the 5'-terminal helix region of 16S rRNA. This Burkholderia cenocepacia (strain HI2424) protein is Ribosome-binding factor A.